The following is a 470-amino-acid chain: Rhamnulokinase (470 aa).

12-16 lines the ATP pocket; the sequence is ASSGR. Residues Ala-80 and 237 to 239 each bind substrate; that span reads HDT. Catalysis depends on Asp-238, which acts as the Proton acceptor. Residue Thr-259 coordinates ATP. Substrate is bound at residue Asn-296. Residue Gln-304 participates in ATP binding. A disulfide bridge connects residues Cys-353 and Cys-370. Gly-402 provides a ligand contact to ATP.

Belongs to the rhamnulokinase family. Requires Mg(2+) as cofactor.

The enzyme catalyses L-rhamnulose + ATP = L-rhamnulose 1-phosphate + ADP + H(+). It participates in carbohydrate degradation; L-rhamnose degradation; glycerone phosphate from L-rhamnose: step 2/3. Involved in the catabolism of L-rhamnose (6-deoxy-L-mannose). Catalyzes the transfer of the gamma-phosphate group from ATP to the 1-hydroxyl group of L-rhamnulose to yield L-rhamnulose 1-phosphate. The sequence is that of Rhamnulokinase from Oceanobacillus iheyensis (strain DSM 14371 / CIP 107618 / JCM 11309 / KCTC 3954 / HTE831).